The chain runs to 400 residues: Argininosuccinate synthase (400 aa).

ATP-binding positions include 6–14 (AYSGGLDTS) and A33. L-citrulline is bound by residues Y84 and S89. G114 contributes to the ATP binding site. L-aspartate is bound by residues T116, N120, and D121. N120 is an L-citrulline binding site. Residues R124, S173, S182, E258, and Y270 each coordinate L-citrulline.

It belongs to the argininosuccinate synthase family. Type 1 subfamily. Homotetramer.

It is found in the cytoplasm. The catalysed reaction is L-citrulline + L-aspartate + ATP = 2-(N(omega)-L-arginino)succinate + AMP + diphosphate + H(+). Its pathway is amino-acid biosynthesis; L-arginine biosynthesis; L-arginine from L-ornithine and carbamoyl phosphate: step 2/3. This chain is Argininosuccinate synthase, found in Thermus thermophilus (strain ATCC BAA-163 / DSM 7039 / HB27).